The sequence spans 240 residues: Acetoacetyl-CoA reductase (240 aa).

NADP(+) is bound by residues 18–20 and 82–86; these read RGI and NAGIT. Substrate-binding positions include Ser134 and 141-144; that span reads NVGQ. Tyr147 acts as the Proton acceptor in catalysis. 177–180 is an NADP(+) binding site; the sequence is PGFI. Substrate is bound at residue 178–179; sequence GF.

The protein belongs to the short-chain dehydrogenases/reductases (SDR) family.

It catalyses the reaction a (3R)-3-hydroxyacyl-CoA + NADP(+) = a 3-oxoacyl-CoA + NADPH + H(+). It functions in the pathway biopolymer metabolism; poly-(R)-3-hydroxybutanoate biosynthesis. In terms of biological role, catalyzes the reduction of acetoacetyl-CoA to (R)-3-hydroxybutyryl-CoA. When expressed in E.coli with Synechocystis PhaA, PhaC and PhaE confers the ability to synthesize up to 12% (w/w) poly(3-hydroxybutyrate) (PHB) depending on the carbon source. The protein is Acetoacetyl-CoA reductase of Synechocystis sp. (strain ATCC 27184 / PCC 6803 / Kazusa).